A 537-amino-acid polypeptide reads, in one-letter code: MFS-type transporter qa-x (537 aa).

Over 1–26 (MTLLALKEDRPTPKAVYNWRVYTCAA) the chain is Cytoplasmic. A helical transmembrane segment spans residues 27–47 (IASFASCMIGYDSAFIGTTLA). The Extracellular portion of the chain corresponds to 48–74 (LPSFTKEFDFASYTPGALALLQSNIVS). Residues 75–95 (VYQAGAFFGCLFAYATSYFLG) traverse the membrane as a helical segment. The Cytoplasmic segment spans residues 96–98 (RRK). A helical transmembrane segment spans residues 99–119 (SLIAFSVVFIIGAAIMLAADG). Over 120-131 (QGRGIDPIIAGR) the chain is Extracellular. Residues 132–152 (VLAGIGVGGASNMVPIYISEL) traverse the membrane as a helical segment. At 153-160 (APPAVRGR) the chain is on the cytoplasmic side. The helical transmembrane segment at 161 to 181 (LVGIYELGWQIGGLVGFWINY) threads the bilayer. Residues 182–195 (GVNTTMAPTRSQWL) are Extracellular-facing. Asparagine 184 carries an N-linked (GlcNAc...) asparagine glycan. Residues 196 to 216 (IPFAVQLIPAGLLFLGSFWIP) form a helical membrane-spanning segment. Residues 217–285 (ESPRWLYANG…SLKQRKVQWR (69 aa)) are Cytoplasmic-facing. Residues 286 to 306 (FFLGGMLFFWQNGSGINAINY) traverse the membrane as a helical segment. At 307-327 (YSPTVFRSIGITGTDTGFLTT) the chain is on the extracellular side. A helical membrane pass occupies residues 328–349 (GIFGVVKMVLTIIWLLWLVDLV). The Cytoplasmic portion of the chain corresponds to 350–352 (GRR). Residues 353–373 (RILFIGAAGGSLCMWFIGAYI) form a helical membrane-spanning segment. The Extracellular segment spans residues 374 to 389 (KIADPGSNKAEDAKLT). The chain crosses the membrane as a helical span at residues 390–410 (SGGIAAIFFFYLWTAFYTPSW). The Cytoplasmic portion of the chain corresponds to 411-435 (NGTPWVINSEMFDQNTRSLGQASAA). A helical membrane pass occupies residues 436–456 (ANNWFWNFIISRFTPQMFIKM). The Extracellular portion of the chain corresponds to 457-458 (EY). A helical transmembrane segment spans residues 459–479 (GVYFFFASLMLLSIVFIYFFL). Over 480–537 (PETKSIPLEAMDRLFEIKPVQNANKNLMAELNFDRNPEREESSSLDDKDRVTQTENAV) the chain is Cytoplasmic. The span at 514-531 (RNPEREESSSLDDKDRVT) shows a compositional bias: basic and acidic residues. Residues 514-537 (RNPEREESSSLDDKDRVTQTENAV) form a disordered region.

Belongs to the major facilitator superfamily. Sugar transporter (TC 2.A.1.1) family.

It localises to the membrane. Its function is as follows. MFS-type transporter; part of the qa gene cluster that mediates the catabolism of quinic acid (QA) and as such, allows the use of QA as a sole carbon source. Involved in the upatke of QA. The qa cluster encodes 3 inducible enymes (qa-2, qa-3 and qa-4) catalyzing the first three reactions in the catabolism of quinic acid to protocatechuic acid (also known as 3,4-Dihydroxybenzoic acid). The sequence is that of MFS-type transporter qa-x from Neurospora crassa (strain ATCC 24698 / 74-OR23-1A / CBS 708.71 / DSM 1257 / FGSC 987).